A 428-amino-acid chain; its full sequence is MIDPNLLRSNLDLVAKKLARRKFILNINKFRQQESLRKILQKKTESLQTERKAKAKIIGVAKSRGENVEFLCQEAYVLGKKLTSLKLENKELKNRIKQFELSLPNIPDDQVPYGFRDQDNLEIMRWGKPGQYNFPIRDHVALGALTNGLDFSNATKLTGSRFIVMKGQIAHLHRALSQFMIDLHVKRHGYEEYYLPYLVNQDSLYGAGQLPKFYEDLFHIQHLQSGTNPYALIPTAEVPLINLVRDVILDEEELPIKMVAHTPCFRYEAGSYGHHTRGLIRMHQFDKVEMVQVVHPDKSMQILEEITSHAEQVLQLLKLPYRKILLCTGNIGFSSCKTYDLEVWLPAYNAYCEVSSCSNVGDFQARRIRARYKGRMNRKARLLHTLNASGVAIGRALAAVLENYQLEDGRVAIPSVLSPYMSDITHIN.

235 to 237 is a binding site for L-serine; the sequence is TAE. Residue 266–268 participates in ATP binding; that stretch reads RYE. Residue E289 coordinates L-serine. 353 to 356 contacts ATP; sequence EVSS. S389 is a binding site for L-serine.

This sequence belongs to the class-II aminoacyl-tRNA synthetase family. Type-1 seryl-tRNA synthetase subfamily. In terms of assembly, homodimer. The tRNA molecule binds across the dimer.

It is found in the cytoplasm. The enzyme catalyses tRNA(Ser) + L-serine + ATP = L-seryl-tRNA(Ser) + AMP + diphosphate + H(+). It catalyses the reaction tRNA(Sec) + L-serine + ATP = L-seryl-tRNA(Sec) + AMP + diphosphate + H(+). Its pathway is aminoacyl-tRNA biosynthesis; selenocysteinyl-tRNA(Sec) biosynthesis; L-seryl-tRNA(Sec) from L-serine and tRNA(Sec): step 1/1. In terms of biological role, catalyzes the attachment of serine to tRNA(Ser). Is also able to aminoacylate tRNA(Sec) with serine, to form the misacylated tRNA L-seryl-tRNA(Sec), which will be further converted into selenocysteinyl-tRNA(Sec). The protein is Serine--tRNA ligase of Blochmanniella pennsylvanica (strain BPEN).